The sequence spans 310 residues: Protoheme IX farnesyltransferase (310 aa).

9 helical membrane passes run 26–45 (VMSL…PVTV), 49–71 (IALT…NMWW), 95–115 (GEAL…LGLA), 118–138 (LFAA…YSMW), 147–167 (IVIG…VATG), 174–194 (LFMF…LALF), 220–240 (VLVY…TGIG), 243–263 (LYLA…VRIW), and 289–309 (LFLH…GLGG).

This sequence belongs to the UbiA prenyltransferase family. Protoheme IX farnesyltransferase subfamily. In terms of assembly, interacts with CtaA.

The protein localises to the cell inner membrane. The enzyme catalyses heme b + (2E,6E)-farnesyl diphosphate + H2O = Fe(II)-heme o + diphosphate. It participates in porphyrin-containing compound metabolism; heme O biosynthesis; heme O from protoheme: step 1/1. Its function is as follows. Converts heme B (protoheme IX) to heme O by substitution of the vinyl group on carbon 2 of heme B porphyrin ring with a hydroxyethyl farnesyl side group. The polypeptide is Protoheme IX farnesyltransferase (Cereibacter sphaeroides (strain ATCC 17029 / ATH 2.4.9) (Rhodobacter sphaeroides)).